Here is a 366-residue protein sequence, read N- to C-terminus: Glutamate 5-kinase (366 aa).

Lys17 is an ATP binding site. The substrate site is built by Ser57, Asp144, and Asn156. Residues 176–177 (SD) and 216–222 (TGGMASK) contribute to the ATP site. The region spanning 278-352 (QGILHIDEGA…GKSTQELPAE (75 aa)) is the PUA domain.

The protein belongs to the glutamate 5-kinase family.

The protein localises to the cytoplasm. The catalysed reaction is L-glutamate + ATP = L-glutamyl 5-phosphate + ADP. It participates in amino-acid biosynthesis; L-proline biosynthesis; L-glutamate 5-semialdehyde from L-glutamate: step 1/2. In terms of biological role, catalyzes the transfer of a phosphate group to glutamate to form L-glutamate 5-phosphate. This Rhodococcus jostii (strain RHA1) protein is Glutamate 5-kinase.